A 1827-amino-acid polypeptide reads, in one-letter code: Sucrase-isomaltase, intestinal (1827 aa).

Residues 2-12 lie on the Cytoplasmic side of the membrane; sequence ARKKFSGLEIS. The residue at position 7 (Ser-7) is a Phosphoserine; by PKA. Residues 13-32 form a helical; Signal-anchor for type II membrane protein membrane-spanning segment; sequence LIVLFVIVTIIAIALIVVLA. The Lumenal segment spans residues 33–1827; that stretch reads TKTPAVDEIS…LEEPIEINWS (1795 aa). The interval 40-61 is disordered; sequence EISDSTSTPATTRVTTNPSDSG. Over residues 45–55 the composition is skewed to low complexity; that stretch reads TSTPATTRVTT. The P-type 1 domain maps to 61–110; it reads GKCPNVLNDPVNVRINCIPEQFPTEGICAQRGCCWRPWNDSLIPWCFFVD. Intrachain disulfides connect Cys-63-Cys-94, Cys-77-Cys-93, and Cys-88-Cys-106. N-linked (GlcNAc...) asparagine glycosylation occurs at Asn-99. An isomaltase region spans residues 110 to 1007; sequence DNHGYNVQDM…DLQLNTANAR (898 aa). Tyr-237 and Tyr-239 each carry sulfotyrosine. Substrate-binding residues include Asp-264 and Asp-388. Tyr-391 and Tyr-400 each carry sulfotyrosine. N-linked (GlcNAc...) asparagine glycosylation is found at Asn-437 and Asn-455. Asp-505 functions as the Nucleophile; for isomaltase activity in the catalytic mechanism. Cys-520 and Cys-545 form a disulfide bridge. Arg-588 contributes to the substrate binding site. The active-site For isomaltase activity is the Asp-604. A disulfide bond links Cys-635 and Cys-646. His-662 serves as a coordination point for substrate. Tyr-667, Tyr-763, and Tyr-765 each carry sulfotyrosine. N-linked (GlcNAc...) asparagine glycans are attached at residues Asn-823, Asn-855, Asn-904, and Asn-926. The 47-residue stretch at 932–978 folds into the P-type 2 domain; the sequence is NQIFSENERFNCYPDADLATEQKCTQRGCVWRTGSSLSKAPECYFPR. Positions 1008-1827 are sucrase; the sequence is IKLPSDPIST…LEEPIEINWS (820 aa). Asn-1235, Asn-1303, Asn-1340, and Asn-1354 each carry an N-linked (GlcNAc...) asparagine glycan. Asp-1394 (nucleophile; for sucrase activity) is an active-site residue. Catalysis depends on Glu-1397, which acts as the For sucrase activity. Asn-1403 carries an N-linked (GlcNAc...) asparagine glycan. Catalysis depends on Asp-1500, which acts as the Proton donor; for isomaltase activity. N-linked (GlcNAc...) asparagine glycosylation is found at Asn-1535, Asn-1572, Asn-1675, Asn-1748, Asn-1763, and Asn-1815.

It belongs to the glycosyl hydrolase 31 family. In terms of assembly, the resulting sucrase and isomaltase subunits stay associated with one another in a complex by non-covalent linkages. Post-translationally, the precursor is proteolytically cleaved when exposed to pancreatic proteases in the intestinal lumen. In terms of processing, sulfated. As to expression, expressed in the poorly differentiated crypt cells of the small intestine as well as in the mature villous cells. Expressed at very low levels in the colon.

The protein resides in the apical cell membrane. It catalyses the reaction Hydrolysis of sucrose and maltose by an alpha-D-glucosidase-type action.. The enzyme catalyses Hydrolysis of (1-&gt;6)-alpha-D-glucosidic linkages in some oligosaccharides produced from starch and glycogen by alpha-amylase, and in isomaltose.. Its function is as follows. Plays an important role in the final stage of carbohydrate digestion. Isomaltase activity is specific for both alpha-1,4- and alpha-1,6-oligosaccharides. In Homo sapiens (Human), this protein is Sucrase-isomaltase, intestinal (SI).